We begin with the raw amino-acid sequence, 182 residues long: MVESQFHSTTICAVEKDGKFAMAGDGQVTMGESVVMKGTAKKVRRIYNDEVVVGFAGSVADAFTLEEKFEGKLNEYNGNLTRAAVELAQEWRTQQSMQKLEAMLIVMNKEEMLLVSGTGEVITPDDGILAIGSGGNFALSAARAMKNFGDKEMPAKEIAKNALNIAADICVFTNHNIIVEEL.

Residue Thr9 is part of the active site. Positions 167, 170, and 173 each coordinate Na(+).

This sequence belongs to the peptidase T1B family. HslV subfamily. A double ring-shaped homohexamer of HslV is capped on each side by a ring-shaped HslU homohexamer. The assembly of the HslU/HslV complex is dependent on binding of ATP.

It localises to the cytoplasm. It carries out the reaction ATP-dependent cleavage of peptide bonds with broad specificity.. Its activity is regulated as follows. Allosterically activated by HslU binding. Functionally, protease subunit of a proteasome-like degradation complex believed to be a general protein degrading machinery. The chain is ATP-dependent protease subunit HslV from Enterococcus faecalis (strain ATCC 700802 / V583).